Consider the following 426-residue polypeptide: Dihydroorotase (426 aa).

H62 and H64 together coordinate Zn(2+). Residues 64 to 66 (HLR) and N96 each bind substrate. D154, H181, H234, and D307 together coordinate Zn(2+). D307 is an active-site residue. H311 provides a ligand contact to substrate.

This sequence belongs to the metallo-dependent hydrolases superfamily. DHOase family. Class I DHOase subfamily. It depends on Zn(2+) as a cofactor.

The catalysed reaction is (S)-dihydroorotate + H2O = N-carbamoyl-L-aspartate + H(+). It functions in the pathway pyrimidine metabolism; UMP biosynthesis via de novo pathway; (S)-dihydroorotate from bicarbonate: step 3/3. Functionally, catalyzes the reversible cyclization of carbamoyl aspartate to dihydroorotate. The polypeptide is Dihydroorotase (Syntrophus aciditrophicus (strain SB)).